Here is a 283-residue protein sequence, read N- to C-terminus: Elongation factor Ts (283 aa).

The segment at 80 to 83 is involved in Mg(2+) ion dislocation from EF-Tu; it reads TDFV.

The protein belongs to the EF-Ts family.

Its subcellular location is the cytoplasm. Its function is as follows. Associates with the EF-Tu.GDP complex and induces the exchange of GDP to GTP. It remains bound to the aminoacyl-tRNA.EF-Tu.GTP complex up to the GTP hydrolysis stage on the ribosome. The protein is Elongation factor Ts of Salmonella gallinarum (strain 287/91 / NCTC 13346).